The following is a 121-amino-acid chain: Spermidine export protein MdtJ (121 aa).

4 consecutive transmembrane segments (helical) span residues 1–21 (MYIY…GTLS), 32–52 (GGFI…SFAV), 55–75 (IALG…ITLF), and 82–102 (ESLS…IVLI).

The protein belongs to the drug/metabolite transporter (DMT) superfamily. Small multidrug resistance (SMR) (TC 2.A.7.1) family. MdtJ subfamily. Forms a complex with MdtI.

The protein resides in the cell inner membrane. Its function is as follows. Catalyzes the excretion of spermidine. The protein is Spermidine export protein MdtJ of Escherichia coli O127:H6 (strain E2348/69 / EPEC).